Reading from the N-terminus, the 211-residue chain is Methylthioribulose-1-phosphate dehydratase (211 aa).

The Zn(2+) site is built by histidine 101 and histidine 103.

Belongs to the aldolase class II family. MtnB subfamily. Zn(2+) is required as a cofactor.

It catalyses the reaction 5-(methylsulfanyl)-D-ribulose 1-phosphate = 5-methylsulfanyl-2,3-dioxopentyl phosphate + H2O. Its pathway is amino-acid biosynthesis; L-methionine biosynthesis via salvage pathway; L-methionine from S-methyl-5-thio-alpha-D-ribose 1-phosphate: step 2/6. In terms of biological role, catalyzes the dehydration of methylthioribulose-1-phosphate (MTRu-1-P) into 2,3-diketo-5-methylthiopentyl-1-phosphate (DK-MTP-1-P). The sequence is that of Methylthioribulose-1-phosphate dehydratase from Alcanivorax borkumensis (strain ATCC 700651 / DSM 11573 / NCIMB 13689 / SK2).